The chain runs to 622 residues: Chaperone protein HscA homolog (622 aa).

Belongs to the heat shock protein 70 family.

Functionally, chaperone involved in the maturation of iron-sulfur cluster-containing proteins. Has a low intrinsic ATPase activity which is markedly stimulated by HscB. This is Chaperone protein HscA homolog from Burkholderia lata (strain ATCC 17760 / DSM 23089 / LMG 22485 / NCIMB 9086 / R18194 / 383).